The primary structure comprises 628 residues: UvrABC system protein C (628 aa).

One can recognise a GIY-YIG domain in the interval 21–100 (TGPGIYQFKN…IKELKPRYNV (80 aa)). The region spanning 214–249 (AGLLKELHEKMLTAAAELRFEEAAELKMQLQSLRRY) is the UVR domain.

It belongs to the UvrC family. As to quaternary structure, interacts with UvrB in an incision complex.

It localises to the cytoplasm. The UvrABC repair system catalyzes the recognition and processing of DNA lesions. UvrC both incises the 5' and 3' sides of the lesion. The N-terminal half is responsible for the 3' incision and the C-terminal half is responsible for the 5' incision. The protein is UvrABC system protein C of Chlorobium luteolum (strain DSM 273 / BCRC 81028 / 2530) (Pelodictyon luteolum).